The following is a 582-amino-acid chain: MDKYTAYVWPRLEPFLVGVLPATPPSKFSMHYLRKMASYVRTRDGCFPRLGWQMWRHIACGKLQLAEDLAWLYFETFDLLMPRSAEQRLEWAEALSQCHTQKELDRQRCKLSVDTLQFLLFLYLQQLNRISLRTSLIGEEWPSPRSRSPSSSSSERDAKISSQNKNWDVQAHLTFIQTHLPELLELLVEPGQLSSSGQVLRDSHLTSEAVESLSLLLEGSVSHSRTVHPVHKLLSRSQLQSQAGFSKLSCSYSLQQFQDFLRQALCLNPFGISNCSQSGKKLSWALQVEGTLKKAKIFRNTHAAPPGSRLVLMSQVCKQTLAKDSEKLNDVNIKLHRCSEAFIYLLSPLWSVTLDKCRNSTLVLGPVRTSVHIQSCENVRVVCVAGRLTIGGSFNCTIHSLTPTRPLLLPGNASLTLGPFHTQYPTLEDHMASAGLAVVPNLWNQPLLFGVEGSAPDTGCYRIQPPSEFYPLVIPFQMDGDNCEIPCSLPEDFQKALESREKTIEEWQKTVKDAHLNKAQRRQFQALVEQKFHEWLLETGQRQELDSLLPPTITPSSSAEHWSSNQNTLKEQTHEQPTGTVC.

Over residues 140–153 the composition is skewed to low complexity; the sequence is EWPSPRSRSPSSSS. A disordered region spans residues 140 to 159; that stretch reads EWPSPRSRSPSSSSSERDAK. One can recognise a C-CAP/cofactor C-like domain in the interval 305-451; that stretch reads PPGSRLVLMS…LWNQPLLFGV (147 aa). A compositionally biased stretch (low complexity) spans 547–558; the sequence is SLLPPTITPSSS. The interval 547 to 582 is disordered; it reads SLLPPTITPSSSAEHWSSNQNTLKEQTHEQPTGTVC. Residues 559-582 show a composition bias toward polar residues; the sequence is AEHWSSNQNTLKEQTHEQPTGTVC.

This sequence belongs to the TBCC family.

Its subcellular location is the cytoplasm. The protein resides in the cytoskeleton. The protein localises to the microtubule organizing center. It localises to the centrosome. It is found in the spindle pole. Functionally, may play a role in the regulation of centrosome and Golgi apparatus positioning. The polypeptide is TBCC domain-containing protein 1 (tbccd1) (Danio rerio (Zebrafish)).